The chain runs to 307 residues: Thymidylate synthase (307 aa).

Residue Arg-44 participates in dUMP binding. Ser-108 is subject to Phosphoserine. DUMP is bound by residues 169 to 170 (RR), 189 to 190 (CH), 209 to 212 (RSGD), Asn-220, and 250 to 252 (HIY). Cys-189 functions as the Nucleophile in the catalytic mechanism. Asp-212 serves as a coordination point for (6R)-5,10-methylene-5,6,7,8-tetrahydrofolate. Glycyl lysine isopeptide (Lys-Gly) (interchain with G-Cter in SUMO2) cross-links involve residues Lys-286 and Lys-302. Residue Ala-306 participates in (6R)-5,10-methylene-5,6,7,8-tetrahydrofolate binding.

The protein belongs to the thymidylate synthase family. In terms of assembly, homodimer.

Its subcellular location is the nucleus. The protein resides in the cytoplasm. It localises to the mitochondrion. It is found in the mitochondrion matrix. The protein localises to the mitochondrion inner membrane. The catalysed reaction is dUMP + (6R)-5,10-methylene-5,6,7,8-tetrahydrofolate = 7,8-dihydrofolate + dTMP. The protein operates within pyrimidine metabolism; dTTP biosynthesis. Functionally, catalyzes the reductive methylation of 2'-deoxyuridine 5'-monophosphate (dUMP) to thymidine 5'-monophosphate (dTMP), using the cosubstrate, 5,10- methylenetetrahydrofolate (CH2H4folate) as a 1-carbon donor and reductant and contributes to the de novo mitochondrial thymidylate biosynthesis pathway. The protein is Thymidylate synthase (Tyms) of Mus musculus (Mouse).